Here is a 187-residue protein sequence, read N- to C-terminus: Peptidyl-tRNA hydrolase (187 aa).

Tyrosine 14 provides a ligand contact to tRNA. The Proton acceptor role is filled by histidine 19. TRNA is bound by residues tyrosine 64 and asparagine 66.

It belongs to the PTH family. In terms of assembly, monomer.

The protein resides in the cytoplasm. It carries out the reaction an N-acyl-L-alpha-aminoacyl-tRNA + H2O = an N-acyl-L-amino acid + a tRNA + H(+). Functionally, hydrolyzes ribosome-free peptidyl-tRNAs (with 1 or more amino acids incorporated), which drop off the ribosome during protein synthesis, or as a result of ribosome stalling. In terms of biological role, catalyzes the release of premature peptidyl moieties from peptidyl-tRNA molecules trapped in stalled 50S ribosomal subunits, and thus maintains levels of free tRNAs and 50S ribosomes. This chain is Peptidyl-tRNA hydrolase, found in Carboxydothermus hydrogenoformans (strain ATCC BAA-161 / DSM 6008 / Z-2901).